The primary structure comprises 484 residues: Transmembrane protein 161B (484 aa).

The chain crosses the membrane as a helical span at residues Leu108–Val128. An N-linked (GlcNAc...) asparagine glycan is attached at Asn136. 2 consecutive transmembrane segments (helical) span residues Ile137–Thr157 and Ser170–Thr190. Asn204 carries N-linked (GlcNAc...) asparagine glycosylation. The next 4 helical transmembrane spans lie at Phe229 to Leu249, Val266 to Val286, Val368 to His388, and Leu456 to Phe476.

It belongs to the TMEM161 family.

It localises to the cell membrane. Its function is as follows. Essential for maintaining normal cardiac rhythm in the developing heart and for neonatal survival. Inhibits potassium and calcium currents in the cardiomyocytes, this assists in timely action potential repolarization and thereby maintains normal cardiac rhythm. The protein is Transmembrane protein 161B (tmem161b) of Danio rerio (Zebrafish).